Here is a 127-residue protein sequence, read N- to C-terminus: Glycine cleavage system H protein (127 aa).

The Lipoyl-binding domain occupies 22-104 (KVRIGITDFA…YEKAWMIVVE (83 aa)). An N6-lipoyllysine modification is found at K63.

Belongs to the GcvH family. In terms of assembly, the glycine cleavage system is composed of four proteins: P, T, L and H. (R)-lipoate is required as a cofactor.

In terms of biological role, the glycine cleavage system catalyzes the degradation of glycine. The H protein shuttles the methylamine group of glycine from the P protein to the T protein. Its function is as follows. Is also involved in protein lipoylation via its role as an octanoyl/lipoyl carrier protein intermediate. This chain is Glycine cleavage system H protein, found in Geobacillus sp. (strain WCH70).